Reading from the N-terminus, the 354-residue chain is Photosystem II D2 protein (354 aa).

T2 is subject to N-acetylthreonine. T2 is subject to Phosphothreonine. The helical transmembrane segment at 42 to 62 (CAYFALGGFFTGNTFVTSWYT) threads the bilayer. H119 serves as a coordination point for chlorophyll a. A helical transmembrane segment spans residues 126 to 142 (GFMLRQFEIARAVKIRP). Pheophytin a-binding residues include Q131 and N144. Residues 154–167 (VFVSVFLIYPLGQQ) form a helical membrane-spanning segment. A chlorophyll a-binding site is contributed by H199. Residues 209 to 229 (AALLCAIHGATVENTLFEDGD) form a helical membrane-spanning segment. A plastoquinone-binding residues include H216 and F263. Fe cation is bound at residue H216. H270 provides a ligand contact to Fe cation. A helical transmembrane segment spans residues 280–296 (GLWMSAIGVVGLALNLR).

It belongs to the reaction center PufL/M/PsbA/D family. PSII is composed of 1 copy each of membrane proteins PsbA, PsbB, PsbC, PsbD, PsbE, PsbF, PsbH, PsbI, PsbJ, PsbK, PsbL, PsbM, PsbT, PsbX, PsbY, PsbZ, Psb30/Ycf12, at least 3 peripheral proteins of the oxygen-evolving complex and a large number of cofactors. It forms dimeric complexes. The D1/D2 heterodimer binds P680, chlorophylls that are the primary electron donor of PSII, and subsequent electron acceptors. It shares a non-heme iron and each subunit binds pheophytin, quinone, additional chlorophylls, carotenoids and lipids. There is also a Cl(-1) ion associated with D1 and D2, which is required for oxygen evolution. The PSII complex binds additional chlorophylls, carotenoids and specific lipids. is required as a cofactor.

The protein resides in the plastid. It is found in the chloroplast thylakoid membrane. The enzyme catalyses 2 a plastoquinone + 4 hnu + 2 H2O = 2 a plastoquinol + O2. Photosystem II (PSII) is a light-driven water:plastoquinone oxidoreductase that uses light energy to abstract electrons from H(2)O, generating O(2) and a proton gradient subsequently used for ATP formation. It consists of a core antenna complex that captures photons, and an electron transfer chain that converts photonic excitation into a charge separation. The D1/D2 (PsbA/PsbD) reaction center heterodimer binds P680, the primary electron donor of PSII as well as several subsequent electron acceptors. D2 is needed for assembly of a stable PSII complex. The chain is Photosystem II D2 protein from Mesostigma viride (Green alga).